We begin with the raw amino-acid sequence, 430 residues long: Purine nucleoside phosphorylase LACC1 (430 aa).

Residue Lys247 is modified to N6-acetyllysine. Residues His250, Cys284, and His301 each coordinate Zn(2+).

It belongs to the purine nucleoside phosphorylase YfiH/LACC1 family. As to quaternary structure, interacts with FASN. Interacts with SDHA. Interacts with ATF6, EIF2AK3 and ERN1. Phosphorylated on tyrosine residues. In terms of tissue distribution, predominantly expressed in myeloid cells. Highly expressed in primary macrophages and dendritic cells sorted from the peritoneum or spleen, respectively (at protein level).

It is found in the cytoplasm. The protein resides in the nucleus. The protein localises to the endoplasmic reticulum. Its subcellular location is the peroxisome. The enzyme catalyses adenosine + phosphate = alpha-D-ribose 1-phosphate + adenine. It carries out the reaction inosine + phosphate = alpha-D-ribose 1-phosphate + hypoxanthine. It catalyses the reaction guanosine + phosphate = alpha-D-ribose 1-phosphate + guanine. The catalysed reaction is S-methyl-5'-thioadenosine + phosphate = 5-(methylsulfanyl)-alpha-D-ribose 1-phosphate + adenine. The enzyme catalyses adenosine + H2O + H(+) = inosine + NH4(+). Functionally, purine nucleoside enzyme that catalyzes the phosphorolysis of adenosine, guanosine and inosine nucleosides, yielding D-ribose 1-phosphate and the respective free bases, adenine, guanine and hypoxanthine. Also catalyzes the phosphorolysis of S-methyl-5'-thioadenosine into adenine and S-methyl-5-thio-alpha-D-ribose 1-phosphate. Also has adenosine deaminase activity. Acts as a regulator of innate immunity in macrophages by modulating the purine nucleotide metabolism, thereby regulating the metabolic function and bioenergetic state of macrophages. Enables a purine nucleotide cycle between adenosine and inosine monophosphate and adenylosuccinate that prevents cytoplasmic acidification and balances the cytoplasmic-mitochondrial redox interface. The purine nucleotide cycle consumes aspartate and releases fumarate in a manner involving fatty acid oxidation and ATP-citrate lyase activity. Participates in pattern recognition receptor-induced cytokines in macrophages: associates with the NOD2-signaling complex and promotes optimal NOD2-induced signaling, cytokine secretion and bacterial clearance. Localizes to the endoplasmic reticulum upon PRR stimulation of macrophages and associates with endoplasmic reticulum-stress sensors, promoting the endoplasmic reticulum unfolded protein response (UPR). Does not show laccase activity. This Mus musculus (Mouse) protein is Purine nucleoside phosphorylase LACC1.